A 583-amino-acid polypeptide reads, in one-letter code: Sensor protein SrrB (583 aa).

Topologically, residues Met-1 to Lys-11 are cytoplasmic. Residues Leu-12–Ile-32 traverse the membrane as a helical segment. Topologically, residues Thr-33–Thr-174 are extracellular. Residues Ile-175–Leu-195 form a helical membrane-spanning segment. Residues Ser-196–Glu-583 are Cytoplasmic-facing. The 53-residue stretch at Ser-197 to Asp-249 folds into the HAMP domain. The 218-residue stretch at Asn-366–Glu-583 folds into the Histidine kinase domain. Position 369 is a phosphohistidine; by autocatalysis (His-369).

The protein localises to the cell membrane. The catalysed reaction is ATP + protein L-histidine = ADP + protein N-phospho-L-histidine.. Its function is as follows. Member of the two-component regulatory system SrrA/SrrB, which is involved in the global regulation of staphylococcal virulence factors in response to environmental oxygen levels as well as biofilm formation. Also plays an essential role in host-derived nitric oxide resistance by regulating hmp/flavohemoglobin, an enzyme that detoxifies nitric oxide by converting it to nitrate. Functions as a sensor protein kinase which is autophosphorylated at a histidine residue and transfers its phosphate group to SrrA. In turn, SrrA binds to the upstream promoter regions of the target genes to positively and negatively regulate their expression. The chain is Sensor protein SrrB (srrB) from Staphylococcus aureus.